We begin with the raw amino-acid sequence, 436 residues long: Protein translocase subunit SecY (436 aa).

10 helical membrane passes run 19–39, 68–88, 116–136, 151–171, 179–199, 216–236, 269–289, 313–333, 372–392, and 395–415; these read ILFTIFIILVFRIGTTITVPG, FSVFALGVSPYITASIVVQLL, YISLALAFVQSIGITAGFNAL, LFIGAVLTTGSMIVVWLGEQI, GVSMIIFAGIVASIPEMVKGI, IIFVACLIVAVLLIVYFTTYV, VIPVIFASSITAAPAAVLQFL, GIAMYALLIILFTFFYTFVQI, VGSLFLGFISIIPIIAKDLFG, and DTVALGGTSLLIIIATGIEGM.

This sequence belongs to the SecY/SEC61-alpha family. As to quaternary structure, component of the Sec protein translocase complex. Heterotrimer consisting of SecY, SecE and SecG subunits. The heterotrimers can form oligomers, although 1 heterotrimer is thought to be able to translocate proteins. Interacts with the ribosome. Interacts with SecDF, and other proteins may be involved. Interacts with SecA.

Its subcellular location is the cell membrane. Functionally, the central subunit of the protein translocation channel SecYEG. Consists of two halves formed by TMs 1-5 and 6-10. These two domains form a lateral gate at the front which open onto the bilayer between TMs 2 and 7, and are clamped together by SecE at the back. The channel is closed by both a pore ring composed of hydrophobic SecY resides and a short helix (helix 2A) on the extracellular side of the membrane which forms a plug. The plug probably moves laterally to allow the channel to open. The ring and the pore may move independently. The polypeptide is Protein translocase subunit SecY (Streptococcus gordonii (strain Challis / ATCC 35105 / BCRC 15272 / CH1 / DL1 / V288)).